A 245-amino-acid chain; its full sequence is 1-(5-phosphoribosyl)-5-[(5-phosphoribosylamino)methylideneamino] imidazole-4-carboxamide isomerase (245 aa).

Aspartate 7 functions as the Proton acceptor in the catalytic mechanism. Residue aspartate 129 is the Proton donor of the active site.

The protein belongs to the HisA/HisF family.

Its subcellular location is the cytoplasm. It catalyses the reaction 1-(5-phospho-beta-D-ribosyl)-5-[(5-phospho-beta-D-ribosylamino)methylideneamino]imidazole-4-carboxamide = 5-[(5-phospho-1-deoxy-D-ribulos-1-ylimino)methylamino]-1-(5-phospho-beta-D-ribosyl)imidazole-4-carboxamide. Its pathway is amino-acid biosynthesis; L-histidine biosynthesis; L-histidine from 5-phospho-alpha-D-ribose 1-diphosphate: step 4/9. The sequence is that of 1-(5-phosphoribosyl)-5-[(5-phosphoribosylamino)methylideneamino] imidazole-4-carboxamide isomerase from Shewanella baltica (strain OS195).